A 103-amino-acid polypeptide reads, in one-letter code: MVNAAQRTRVKVEADNRPSVDTHPPGVQPSPGTGGTRHHNFMLCVVLAVPVFSLVLSGTALFTKQRRVSPDDGLITRPILIAVATGALLCFVEKLTDRAGSIC.

The disordered stretch occupies residues 1-34 (MVNAAQRTRVKVEADNRPSVDTHPPGVQPSPGTG). Over residues 10 to 20 (VKVEADNRPSV) the composition is skewed to basic and acidic residues. Transmembrane regions (helical) follow at residues 42-62 (MLCV…TALF) and 73-93 (GLIT…CFVE).

The protein resides in the cell inner membrane. The chain is Putative protein YmfH (ymfH) from Escherichia coli (strain K12).